A 354-amino-acid polypeptide reads, in one-letter code: Glycerol-1-phosphate dehydrogenase [NAD(P)+] (354 aa).

NAD(+)-binding positions include G102–D106 and T124–S127. Position 129 (D129) interacts with substrate. NAD(+) is bound at residue S133. D176 contributes to the substrate binding site. Positions 176 and 256 each coordinate Zn(2+). H260 contributes to the substrate binding site. H272 lines the Zn(2+) pocket.

Belongs to the glycerol-1-phosphate dehydrogenase family. The cofactor is Zn(2+).

It is found in the cytoplasm. The enzyme catalyses sn-glycerol 1-phosphate + NAD(+) = dihydroxyacetone phosphate + NADH + H(+). The catalysed reaction is sn-glycerol 1-phosphate + NADP(+) = dihydroxyacetone phosphate + NADPH + H(+). It participates in membrane lipid metabolism; glycerophospholipid metabolism. Functionally, catalyzes the NAD(P)H-dependent reduction of dihydroxyacetonephosphate (DHAP or glycerone phosphate) to glycerol 1-phosphate (G1P). The G1P thus generated is used as the glycerophosphate backbone of phospholipids in the cellular membranes of Archaea. This is Glycerol-1-phosphate dehydrogenase [NAD(P)+] from Methanothrix thermoacetophila (strain DSM 6194 / JCM 14653 / NBRC 101360 / PT) (Methanosaeta thermophila).